The sequence spans 222 residues: Uridine kinase (222 aa).

13 to 20 (GGSGAGKT) is an ATP binding site.

This sequence belongs to the uridine kinase family.

It localises to the cytoplasm. It carries out the reaction uridine + ATP = UMP + ADP + H(+). It catalyses the reaction cytidine + ATP = CMP + ADP + H(+). It functions in the pathway pyrimidine metabolism; CTP biosynthesis via salvage pathway; CTP from cytidine: step 1/3. Its pathway is pyrimidine metabolism; UMP biosynthesis via salvage pathway; UMP from uridine: step 1/1. In Chlamydia pneumoniae (Chlamydophila pneumoniae), this protein is Uridine kinase.